The primary structure comprises 447 residues: Rab GDP dissociation inhibitor alpha (447 aa).

It belongs to the Rab GDI family. In terms of assembly, interacts with RHOH. Interacts with the non-phosphorylated forms of RAB1A, RAB3A, RAB5A, RAB5B, RAB5C, RAB8A, RAB8B, RAB10, RAB12, RAB35, and RAB43.

Its subcellular location is the cytoplasm. The protein resides in the golgi apparatus. The protein localises to the trans-Golgi network. Regulates the GDP/GTP exchange reaction of most Rab proteins by inhibiting the dissociation of GDP from them, and the subsequent binding of GTP to them. Promotes the dissociation of GDP-bound Rab proteins from the membrane and inhibits their activation. Promotes the dissociation of RAB1A, RAB3A, RAB5A and RAB10 from membranes. This chain is Rab GDP dissociation inhibitor alpha (GDI1), found in Macaca fascicularis (Crab-eating macaque).